The primary structure comprises 367 residues: tRNA/tmRNA (uracil-C(5))-methyltransferase (367 aa).

5 residues coordinate S-adenosyl-L-methionine: glutamine 190, tyrosine 218, asparagine 223, glutamate 239, and aspartate 299. The Nucleophile role is filled by cysteine 324. Glutamate 358 acts as the Proton acceptor in catalysis.

This sequence belongs to the class I-like SAM-binding methyltransferase superfamily. RNA M5U methyltransferase family. TrmA subfamily.

It carries out the reaction uridine(54) in tRNA + S-adenosyl-L-methionine = 5-methyluridine(54) in tRNA + S-adenosyl-L-homocysteine + H(+). It catalyses the reaction uridine(341) in tmRNA + S-adenosyl-L-methionine = 5-methyluridine(341) in tmRNA + S-adenosyl-L-homocysteine + H(+). Dual-specificity methyltransferase that catalyzes the formation of 5-methyluridine at position 54 (m5U54) in all tRNAs, and that of position 341 (m5U341) in tmRNA (transfer-mRNA). The protein is tRNA/tmRNA (uracil-C(5))-methyltransferase of Yersinia enterocolitica serotype O:8 / biotype 1B (strain NCTC 13174 / 8081).